The chain runs to 157 residues: Transcriptional repressor NrdR (157 aa).

The disordered stretch occupies residues 1–26 (MRCPKCGGSKSSVIDSRQAEDGNTIR). A zinc finger lies at 3–34 (CPKCGGSKSSVIDSRQAEDGNTIRRRRECEDC). Over residues 17–26 (RQAEDGNTIR) the composition is skewed to basic and acidic residues. One can recognise an ATP-cone domain in the interval 49–139 (LVVVKKDGTR…VYRSFKDVGE (91 aa)).

The protein belongs to the NrdR family. The cofactor is Zn(2+).

In terms of biological role, negatively regulates transcription of bacterial ribonucleotide reductase nrd genes and operons by binding to NrdR-boxes. In Streptococcus gordonii (strain Challis / ATCC 35105 / BCRC 15272 / CH1 / DL1 / V288), this protein is Transcriptional repressor NrdR.